We begin with the raw amino-acid sequence, 857 residues long: Cadherin-related family member 1a (857 aa).

Residues 1 to 25 (MKNAREIQFSSFLLLAHFCFVGAQS) form the signal peptide. Residues 26–709 (DYAPYFYDNG…RENPMHFLGL (684 aa)) lie on the Extracellular side of the membrane. Cadherin domains are found at residues 40–139 (NGNM…RPQF), 140–252 (QNMP…PPIF), 253–359 (IGTP…PPTF), 365–478 (PQNV…APKF), 479–582 (TSDF…PPAF), and 574–693 (DLND…GPLT). A helical transmembrane segment spans residues 710 to 730 (ISGVILILVFVTVIISTVIFV). The Cytoplasmic portion of the chain corresponds to 731–857 (RRNKANRILP…LEQKNMANRY (127 aa)). Residues 746–765 (RKKRKPQKQDDFQEPFREEQ) form a disordered region. Over residues 752 to 765 (QKQDDFQEPFREEQ) the composition is skewed to basic and acidic residues.

In terms of tissue distribution, expressed in photoreceptor cells of the outer nuclear layer of the retina and in the pinal gland.

It is found in the membrane. In terms of biological role, potential calcium-dependent cell-adhesion protein. Plays a role in the organization of retinal cell layers and Muller glia morphology. The sequence is that of Cadherin-related family member 1a from Danio rerio (Zebrafish).